The sequence spans 317 residues: Olfactory receptor 1B1 (317 aa).

The Extracellular portion of the chain corresponds to 1 to 29 (MSFAPNASHSPVFLLLGFSRANISYTLLF). Residues asparagine 6 and asparagine 22 are each glycosylated (N-linked (GlcNAc...) asparagine). A helical membrane pass occupies residues 30–50 (FLFLAIYLTTILGNVTLVLLI). Over 51-66 (SWDSRLHSPMYYLLRG) the chain is Cytoplasmic. The chain crosses the membrane as a helical span at residues 67-87 (LSVIDMGLSTVTLPQLLAHLV). Residues 88–98 (SHYPTIPAARC) lie on the Extracellular side of the membrane. Cysteine 98 and cysteine 184 are joined by a disulfide. The helical transmembrane segment at 99–119 (LAQFFFFYAFGVTDTLVIAVM) threads the bilayer. Topologically, residues 120 to 144 (ALDRYVAICDPLHYALVMNHQRCAC) are cytoplasmic. Residues 145 to 165 (LLALSWVVSILHTMLRVGLVL) traverse the membrane as a helical segment. The Extracellular segment spans residues 166 to 201 (PLCWTGDAGGNVNLPHFFCDHRPLLRASCSDIHSNE). A helical membrane pass occupies residues 202-222 (LAIFFEGGFLMLGPCALIVLS). Residues 223–248 (YVRIGAAILRLPSAAGRRRAVSTCGS) lie on the Cytoplasmic side of the membrane. The chain crosses the membrane as a helical span at residues 249–269 (HLTMVGFLYGTIICVYFQPPF). Topologically, residues 270-276 (QNSQYQD) are extracellular. A helical transmembrane segment spans residues 277 to 297 (MVASVMYTAITPLANPFVYSL). Residues 298–317 (HNKDVKGALCRLLEWVKVDP) are Cytoplasmic-facing.

It belongs to the G-protein coupled receptor 1 family.

Its subcellular location is the cell membrane. In terms of biological role, odorant receptor. This chain is Olfactory receptor 1B1 (OR1B1), found in Homo sapiens (Human).